Consider the following 129-residue polypeptide: M-zodatoxin-Lt8j (129 aa).

The first 20 residues, 1 to 20, serve as a signal peptide directing secretion; the sequence is MKYFVVALALVAAFACIAES. The propeptide occupies 21–60; it reads KPAESEHELAEVEEENELADLEDAVWLEHLADLSDLEEAR.

It belongs to the cationic peptide 06 (cytoinsectotoxin) family. In terms of tissue distribution, expressed by the venom gland.

Its subcellular location is the secreted. In terms of biological role, insecticidal, cytolytic and antimicrobial peptide. Forms voltage-dependent, ion-permeable channels in membranes. At high concentration causes cell membrane lysis. The polypeptide is M-zodatoxin-Lt8j (cit 1-9) (Lachesana tarabaevi (Spider)).